The primary structure comprises 245 residues: MSGTDENDFEATYAVEMHCESCTNDIQKCLKDVNGIKNVTFDIKDNLMNVEGHAAPSAIINALKNCGRDGIIRGTGKPNSAAVSILGQYTTGPFENTVKGLVRIVEVAQKKTFFDINLNGVEKPGLYYASVRASGDLSEGVKSTGDPIYKFDQPIDCTSPSDSIPNSFSGSSFVSAPVHVWELIGRSFVVTTDPEHNVNKDNDISFGGVIARSAGIWENDKEVCACSGKTLWQERKDAIQHNIRF.

An HMA domain is found at 8–71; it reads DFEATYAVEM…ALKNCGRDGI (64 aa). Cu cation is bound by residues Cys-19 and Cys-22. Cys-29 and Cys-66 form a disulfide bridge. Cu cation contacts are provided by Cys-224 and Cys-226.

The protein belongs to the CCS1 family. It depends on Cu(2+) as a cofactor.

It is found in the cytoplasm. Its function is as follows. Copper chaperone for superoxide dismutase 1 (SOD1). Binds copper ions and delivers them specifically to SOD1. This is Superoxide dismutase 1 copper chaperone (CCS1) from Kluyveromyces lactis (strain ATCC 8585 / CBS 2359 / DSM 70799 / NBRC 1267 / NRRL Y-1140 / WM37) (Yeast).